A 245-amino-acid chain; its full sequence is UPF0246 protein Cgl1995/cg2186 (245 aa).

The protein belongs to the UPF0246 family.

In Corynebacterium glutamicum (strain ATCC 13032 / DSM 20300 / JCM 1318 / BCRC 11384 / CCUG 27702 / LMG 3730 / NBRC 12168 / NCIMB 10025 / NRRL B-2784 / 534), this protein is UPF0246 protein Cgl1995/cg2186.